A 295-amino-acid chain; its full sequence is Tyrosine recombinase XerC (295 aa).

Residues 1 to 84 (MTLEEQFLSY…SLKSFYRLLT (84 aa)) enclose the Core-binding (CB) domain. Residues 105-289 (KLPEFFYQDE…SMQHLTAEYR (185 aa)) form the Tyr recombinase domain. Catalysis depends on residues Arg-145, Lys-169, His-241, Arg-244, and His-267. The active-site O-(3'-phospho-DNA)-tyrosine intermediate is the Tyr-276.

Belongs to the 'phage' integrase family. XerC subfamily. In terms of assembly, forms a cyclic heterotetrameric complex composed of two molecules of XerC and two molecules of XerD.

The protein resides in the cytoplasm. Its function is as follows. Site-specific tyrosine recombinase, which acts by catalyzing the cutting and rejoining of the recombining DNA molecules. The XerC-XerD complex is essential to convert dimers of the bacterial chromosome into monomers to permit their segregation at cell division. It also contributes to the segregational stability of plasmids. This Lactobacillus leichmannii protein is Tyrosine recombinase XerC.